The primary structure comprises 199 residues: Pre-histone-like nucleoprotein (199 aa).

Ser2 is modified (N-acetylserine; by host). A propeptide spanning residues 2-23 (SILISPSDNTGWGLGTGKMYGG) is cleaved from the precursor. Position 26 is an N6-acetyllysine; by host (Lys26). The Nuclear localization signal signature appears at 189–199 (RRKASVRRRRT).

This sequence belongs to the adenoviridae histone-like nucleoprotein family. Interacts with the core-capsid bridging protein; this interaction bridges the virus core to the capsid. Interacts with host NPM1; this interaction might play a role in placing the pre-histone-like nucleoprotein on the viral DNA or regulating viral gene expression. Interacts with host HMGB1; this interaction inhibits host immune response. In terms of processing, cleaved near the N-terminus by the viral protease during virion maturation to form the mature protein.

The protein localises to the virion. The protein resides in the host nucleus. Its subcellular location is the host nucleolus. Its function is as follows. Plays a role in the inhibition of host immune response within the nucleus. Interacts with cellular nucleosomes and immobilizes the host immune danger signal HMGB1 on chromatin. In turn, prevents HMGB1 release out of the cell and thus decreases inflammation. Also plays a role in the wrapping and condensation of the viral DNA. May also promote viral genome import into the nucleus. The chain is Pre-histone-like nucleoprotein from Murine adenovirus A serotype 1 (MAdV-1).